Reading from the N-terminus, the 374-residue chain is 4-hydroxy-3-methylbut-2-en-1-yl diphosphate synthase (flavodoxin) (374 aa).

Positions 270, 273, 305, and 312 each coordinate [4Fe-4S] cluster.

Belongs to the IspG family. Requires [4Fe-4S] cluster as cofactor.

It carries out the reaction (2E)-4-hydroxy-3-methylbut-2-enyl diphosphate + oxidized [flavodoxin] + H2O + 2 H(+) = 2-C-methyl-D-erythritol 2,4-cyclic diphosphate + reduced [flavodoxin]. The protein operates within isoprenoid biosynthesis; isopentenyl diphosphate biosynthesis via DXP pathway; isopentenyl diphosphate from 1-deoxy-D-xylulose 5-phosphate: step 5/6. Converts 2C-methyl-D-erythritol 2,4-cyclodiphosphate (ME-2,4cPP) into 1-hydroxy-2-methyl-2-(E)-butenyl 4-diphosphate. This Cellvibrio japonicus (strain Ueda107) (Pseudomonas fluorescens subsp. cellulosa) protein is 4-hydroxy-3-methylbut-2-en-1-yl diphosphate synthase (flavodoxin).